The following is a 72-amino-acid chain: Large ribosomal subunit protein bL31 (72 aa).

Zn(2+) contacts are provided by cysteine 16, cysteine 18, cysteine 37, and cysteine 40.

The protein belongs to the bacterial ribosomal protein bL31 family. Type A subfamily. Part of the 50S ribosomal subunit. It depends on Zn(2+) as a cofactor.

In terms of biological role, binds the 23S rRNA. The sequence is that of Large ribosomal subunit protein bL31 from Pseudomonas fluorescens (strain Pf0-1).